A 610-amino-acid chain; its full sequence is Anthocyanin regulatory Lc protein (610 aa).

Disordered stretches follow at residues 402–422 (ATGA…MSER) and 468–524 (LESS…PVLT). The region spanning 412–461 (TGTKNHVMSERKRREKLNEMFLVLKSLLPSIHRVNKASILAETIAYLKEL) is the bHLH domain. Residues 481-495 (TTTRLITRPSRGNNE) show a composition bias toward polar residues. Over residues 508-519 (KSPELGRDDVER) the composition is skewed to basic and acidic residues.

It belongs to the bHLH protein family. As to quaternary structure, efficient DNA binding requires dimerization with another bHLH protein.

The protein localises to the nucleus. Functionally, putative transcriptional activator. Controls tissue-specific synthesis of anthocyanin pigments in various parts of the maize plant. In Zea mays (Maize), this protein is Anthocyanin regulatory Lc protein (LC).